A 445-amino-acid chain; its full sequence is Tubulin beta-2B chain (445 aa).

The MREI motif motif lies at 1 to 4; sequence MREI. Position 11 (Gln11) interacts with GTP. The residue at position 40 (Ser40) is a Phosphoserine. Thr55 is modified (phosphothreonine). Residue Lys58 is modified to N6-acetyllysine; alternate. Residue Lys58 is modified to N6-succinyllysine; alternate. Lys58 is covalently cross-linked (Glycyl lysine isopeptide (Lys-Gly) (interchain with G-Cter in ubiquitin); alternate). Glu69, Ser138, Gly142, Thr143, and Gly144 together coordinate GTP. Residue Glu69 participates in Mg(2+) binding. Ser172 is modified (phosphoserine; by CDK1). Asn204 and Asn226 together coordinate GTP. Phosphothreonine is present on residues Thr285 and Thr290. Omega-N-methylarginine is present on Arg318. Lys324 is covalently cross-linked (Glycyl lysine isopeptide (Lys-Gly) (interchain with G-Cter in ubiquitin)). The segment at 422-445 is disordered; sequence YQQYQDATADEQGEFEEEEGEDEA. Over residues 429-445 the composition is skewed to acidic residues; the sequence is TADEQGEFEEEEGEDEA. At Glu438 the chain carries 5-glutamyl polyglutamate.

The protein belongs to the tubulin family. As to quaternary structure, dimer of alpha and beta chains. A typical microtubule is a hollow water-filled tube with an outer diameter of 25 nm and an inner diameter of 15 nM. Alpha-beta heterodimers associate head-to-tail to form protofilaments running lengthwise along the microtubule wall with the beta-tubulin subunit facing the microtubule plus end conferring a structural polarity. Microtubules usually have 13 protofilaments but different protofilament numbers can be found in some organisms and specialized cells. Mg(2+) serves as cofactor. Some glutamate residues at the C-terminus are polyglycylated, resulting in polyglycine chains on the gamma-carboxyl group. Glycylation is mainly limited to tubulin incorporated into axonemes (cilia and flagella) whereas glutamylation is prevalent in neuronal cells, centrioles, axonemes, and the mitotic spindle. Both modifications can coexist on the same protein on adjacent residues, and lowering polyglycylation levels increases polyglutamylation, and reciprocally. The precise function of polyglycylation is still unclear. In terms of processing, some glutamate residues at the C-terminus are polyglutamylated, resulting in polyglutamate chains on the gamma-carboxyl group. Polyglutamylation plays a key role in microtubule severing by spastin (SPAST). SPAST preferentially recognizes and acts on microtubules decorated with short polyglutamate tails: severing activity by SPAST increases as the number of glutamates per tubulin rises from one to eight, but decreases beyond this glutamylation threshold. Post-translationally, phosphorylated on Ser-172 by CDK1 during the cell cycle, from metaphase to telophase, but not in interphase. This phosphorylation inhibits tubulin incorporation into microtubules.

The protein resides in the cytoplasm. It localises to the cytoskeleton. In terms of biological role, tubulin is the major constituent of microtubules, a cylinder consisting of laterally associated linear protofilaments composed of alpha- and beta-tubulin heterodimers. Microtubules grow by the addition of GTP-tubulin dimers to the microtubule end, where a stabilizing cap forms. Below the cap, tubulin dimers are in GDP-bound state, owing to GTPase activity of alpha-tubulin. Implicated in neuronal migration. This is Tubulin beta-2B chain (TUBB2B) from Bos taurus (Bovine).